We begin with the raw amino-acid sequence, 1006 residues long: Transmembrane channel-like protein 5 (1006 aa).

Residues 1–289 (MSAYYRNNWS…DDPVGSLWGE (289 aa)) are disordered. Residues 1–458 (MSAYYRNNWS…YFNFLRWLLK (458 aa)) are Extracellular-facing. Polar residues-rich tracts occupy residues 20-30 (SGSQNRTQGYL), 50-59 (TRSNPYSVAS), and 76-101 (RSLS…SPDH). Residues 138–149 (AGSSSSGNYAGS) show a composition bias toward low complexity. The segment covering 239–250 (REPDYSDAENGH) has biased composition (basic and acidic residues). A helical transmembrane segment spans residues 459–479 (FNIFSFILNFSFIIIPQFTVA). The Cytoplasmic portion of the chain corresponds to 480-485 (KKNTLQ). Residues 486–508 (FTGLEFFTGVGYFRDTVMYYGFY) traverse the membrane as a helical segment. Over 509–525 (TNSTIQHGNSGASYNMQ) the chain is Extracellular. A helical membrane pass occupies residues 526–546 (LAYIFTIGACLTTCFFSLLFS). Residues 547–619 (MAKYFRNNFI…NQLLTRFSAY (73 aa)) lie on the Cytoplasmic side of the membrane. A helical membrane pass occupies residues 620–640 (MVAWVVSTGVAIACCAAVYYL). Over 641 to 654 (AEYNLEFLKTHSNP) the chain is Extracellular. A helical membrane pass occupies residues 655–675 (GAVLLLPFVVSCINLAVPCIY). The Cytoplasmic segment spans residues 676–698 (SMFRLVERYEMPRHEVYVLLIRN). The helical transmembrane segment at 699–719 (IFLKISIIGILCYYWLNTVAL) threads the bilayer. Over 720–732 (SGEECWETLIGQD) the chain is Extracellular. The chain crosses the membrane as a helical span at residues 733–753 (IYRLLLMDFVFSLVNSFLGEF). Residues 754–786 (LRRIIGMQLITSLGLQEFDIARNVLELIYAQTL) are Cytoplasmic-facing. A helical membrane pass occupies residues 787–807 (VWIGIFFCPLLPFIQMIMLFI). Topologically, residues 808–835 (MFYSKNISLMMNFQPPSKAWRASQMMTF) are extracellular. Residues 836–856 (FIFLLFFPSFTGVLCTLAITI) form a helical membrane-spanning segment. Residues 857–900 (WRLKPSADCGPFRGLPLFIHSIYSWIDTLSTRPGYLWVVWIYRN) lie on the Cytoplasmic side of the membrane. A helical transmembrane segment spans residues 901-921 (LIGSVHFFFILTLIVLIITYL). Over 922 to 1006 (YWQITEGRKI…RSVQEGNPRA (85 aa)) the chain is Extracellular.

The protein belongs to the TMC family.

It localises to the membrane. Its function is as follows. Probable component of an ion channel. Molecular function hasn't been characterized yet. The protein is Transmembrane channel-like protein 5 of Homo sapiens (Human).